Reading from the N-terminus, the 275-residue chain is Catechol 1,2-dioxygenase 2 (275 aa).

Fe cation is bound by residues tyrosine 158, tyrosine 192, histidine 216, and histidine 218.

It belongs to the intradiol ring-cleavage dioxygenase family. Homodimer. The cofactor is Fe(3+).

The catalysed reaction is catechol + O2 = cis,cis-muconate + 2 H(+). It functions in the pathway aromatic compound metabolism; beta-ketoadipate pathway; 5-oxo-4,5-dihydro-2-furylacetate from catechol: step 1/3. Functionally, can cleave 4-methyl-, 4-chloro-, and 3-methoxycatechol at lower rates than catechol, but has no activity with 4-nitrocatechol or protocatechuic acid. The chain is Catechol 1,2-dioxygenase 2 (catA2) from Acinetobacter lwoffii.